An 892-amino-acid polypeptide reads, in one-letter code: Microsomal triglyceride transfer protein homolog (892 aa).

The N-terminal stretch at 1 to 19 (MFSSRIWLLLAVTVGVCLA) is a signal peptide.

As to quaternary structure, heterodimer; heterodimerizes with protein disulfide isomerase.

The protein resides in the endoplasmic reticulum. In terms of biological role, catalyzes the transport of cholesteryl ester, and phospholipid between phospholipid surfaces. Does not catalyze transport of triglycerides. Required for the assembly and secretion of plasma lipoproteins that contain apolipoprotein B. Required for normal expression of klf-3. This is Microsomal triglyceride transfer protein homolog from Caenorhabditis elegans.